The following is a 337-amino-acid chain: G-protein coupled receptor 26 (337 aa).

The Extracellular segment spans residues 1 to 10; the sequence is MNSWDAGLAG. The helical transmembrane segment at 11-31 threads the bilayer; the sequence is LLVGTIGVSLLSNGLVLLCLL. Residues 32–47 lie on the Cytoplasmic side of the membrane; sequence HSADIRRQAPALFTLN. Residues 48–68 form a helical membrane-spanning segment; it reads LTCGNLLCTVVNMPLTLAGVV. At 69 to 81 the chain is on the extracellular side; that stretch reads AQRQPAGDRLCRL. C79 and C156 are joined by a disulfide. A helical transmembrane segment spans residues 82-102; that stretch reads AAFLDTFLAANSMLSMAALSI. Residues 103-123 lie on the Cytoplasmic side of the membrane; that stretch reads DRWVAVVFPLSYRAKMRLRDA. The helical transmembrane segment at 124-144 threads the bilayer; it reads AFMVAYTWLHALTFPATALAL. Residues 145-168 lie on the Extracellular side of the membrane; sequence SWLGFHQLYASCTLCSRRPDERLR. A helical membrane pass occupies residues 169-189; that stretch reads FAVFTSAFHALSFLLSFIVLC. Residues 190 to 245 lie on the Cytoplasmic side of the membrane; sequence FTYLKVLKVARFHCKRIDVITMQTLVLLVDIHPSVRERCLEEQKRRRQRATKKIST. The helical transmembrane segment at 246–266 threads the bilayer; the sequence is FIGTFLVCFAPYVITRLVELF. The Extracellular portion of the chain corresponds to 267 to 276; it reads STAPIGSHWG. Residues 277–297 traverse the membrane as a helical segment; that stretch reads VLSKCLAYSKAASDPFVYSLL. Residues 298–337 lie on the Cytoplasmic side of the membrane; it reads RHQYRRSCKELLNRIFNRRSLHSVGLTGDSHSQNILPVSE.

The protein belongs to the G-protein coupled receptor 1 family. In terms of tissue distribution, exclusively expressed in the brain. Prominent expression is detected throughout the entire neocortex at all rostrocaudal and dorsoventral levels. Strong expression is detected in olfactory and auditory sensory areas.

The protein resides in the cell membrane. Orphan receptor. Displays a significant level of constitutive activity. Its effect is mediated by G(s)-alpha protein that stimulate adenylate cyclase, resulting in an elevation of intracellular cAMP. The protein is G-protein coupled receptor 26 (Gpr26) of Mus musculus (Mouse).